Here is a 284-residue protein sequence, read N- to C-terminus: Tropomyosin Por p 1.0101 (284 aa).

Met-1 carries the post-translational modification N-acetylmethionine. Residues 1-21 form a disordered region; sequence MDAIKKKMQAMKLEKDDAMDR. The stretch at 1–280 forms a coiled coil; sequence MDAIKKKMQA…TDELDQAFSE (280 aa). Residues 12–21 show a composition bias toward basic and acidic residues; sequence KLEKDDAMDR.

The protein belongs to the tropomyosin family. Homodimer. Expressed in muscle (at protein level). Expressed in pincer muscles.

In terms of biological role, tropomyosin, in association with the troponin complex, plays a central role in the calcium dependent regulation of muscle contraction. The sequence is that of Tropomyosin Por p 1.0101 from Portunus pelagicus (Blue swimmer crab).